The sequence spans 311 residues: Tyrosine recombinase XerD (311 aa).

Residues 1–83 (MEFIAQFLEM…TIKSYYAFLI (83 aa)) form the Core-binding (CB) domain. Residues 104-299 (KLPIILSIDQ…HTNHLKKALL (196 aa)) form the Tyr recombinase domain. Active-site residues include arginine 145, lysine 176, histidine 251, arginine 254, and histidine 277. The active-site O-(3'-phospho-DNA)-tyrosine intermediate is the tyrosine 286.

The protein belongs to the 'phage' integrase family. XerD subfamily. As to quaternary structure, forms a cyclic heterotetrameric complex composed of two molecules of XerC and two molecules of XerD.

The protein localises to the cytoplasm. Functionally, site-specific tyrosine recombinase, which acts by catalyzing the cutting and rejoining of the recombining DNA molecules. The XerC-XerD complex is essential to convert dimers of the bacterial chromosome into monomers to permit their segregation at cell division. It also contributes to the segregational stability of plasmids. This is Tyrosine recombinase XerD from Rickettsia prowazekii (strain Madrid E).